A 347-amino-acid chain; its full sequence is NADH-ubiquinone oxidoreductase chain 2 (347 aa).

A run of 10 helical transmembrane segments spans residues Ile13 to Phe33, Tyr59 to Leu79, Trp84 to Met104, Phe111 to Leu131, Ile149 to Gly169, Ile178 to Pro198, Thr201 to Ile221, Ile240 to Phe260, Ile276 to Leu296, and Leu326 to Leu346.

This sequence belongs to the complex I subunit 2 family. In terms of assembly, core subunit of respiratory chain NADH dehydrogenase (Complex I) which is composed of 45 different subunits. Interacts with TMEM242.

It localises to the mitochondrion inner membrane. It carries out the reaction a ubiquinone + NADH + 5 H(+)(in) = a ubiquinol + NAD(+) + 4 H(+)(out). Functionally, core subunit of the mitochondrial membrane respiratory chain NADH dehydrogenase (Complex I) that is believed to belong to the minimal assembly required for catalysis. Complex I functions in the transfer of electrons from NADH to the respiratory chain. The immediate electron acceptor for the enzyme is believed to be ubiquinone. This chain is NADH-ubiquinone oxidoreductase chain 2, found in Chrotopterus auritus (Peters's woolly false vampire bat).